The following is a 566-amino-acid chain: Insulinoma-associated protein 2 (566 aa).

Residues 1 to 20 (MPRGFLVKRTKRTGGLYRVR) are SNAG domain. Residues 32–117 (QGAPPFLEEA…PSPSPAKPAG (86 aa)) form a disordered region. The span at 103–113 (GPSPSPSPSPA) shows a compositional bias: pro residues. The segment at 263-283 (FICQLCKEQYADPFALAQHRC) adopts a C2H2-type 1; atypical zinc-finger fold. Residues 291–313 (YRCPECDKVFSCPANLASHRRWH) form a C2H2-type 2 zinc finger. The tract at residues 310–418 (RRWHKPRPAA…RRVPVPGSTS (109 aa)) is disordered. Positions 318-348 (AAANAATVSSADGKPPSSSSSSSRDSGAIAS) are enriched in low complexity. A compositionally biased stretch (basic and acidic residues) spans 352–369 (EGKENSRIERTADQHPQA). C2H2-type zinc fingers lie at residues 426-448 (FVCP…LSTH), 470-492 (FACP…RLWH), and 525-548 (FSCK…NKCH).

As to expression, expressed in heart, liver, skeletal muscle, kidney and pancreas, and, to a lesser extent, in brain, lung and spleen. In the pancreas, expressed in islet cells, including insulin- and glucagon-producing alpha- and beta-cells, but not in acinar cells (at protein level). Detected in adrenal glands, particularly in the deeper layer of the cortex (at protein level).

Its subcellular location is the cytoplasm. The protein localises to the nucleus. May function as a growth suppressor or tumor suppressor in liver cells and in certain neurons. This is Insulinoma-associated protein 2 (INSM2) from Homo sapiens (Human).